The primary structure comprises 152 residues: Ribonuclease pancreatic (152 aa).

Residues 1-24 (MALDKSVILLPLLVLVLLVLGCLG) form the signal peptide. Substrate contacts are provided by lysine 31 and arginine 34. Histidine 36 (proton acceptor) is an active-site residue. Asparagine 46 carries N-linked (GlcNAc...) asparagine glycosylation. Disulfide bonds link cysteine 50–cysteine 108, cysteine 64–cysteine 119, cysteine 82–cysteine 134, and cysteine 89–cysteine 96. Residues 65 to 69 (KPVNT), lysine 90, and arginine 109 each bind substrate. The N-linked (GlcNAc...) asparagine glycan is linked to asparagine 112. The active-site Proton donor is the histidine 143.

Belongs to the pancreatic ribonuclease family. Monomer. Interacts with and forms tight 1:1 complexes with RNH1. Dimerization of two such complexes may occur. Interaction with RNH1 inhibits this protein.

The protein resides in the secreted. The catalysed reaction is an [RNA] containing cytidine + H2O = an [RNA]-3'-cytidine-3'-phosphate + a 5'-hydroxy-ribonucleotide-3'-[RNA].. It catalyses the reaction an [RNA] containing uridine + H2O = an [RNA]-3'-uridine-3'-phosphate + a 5'-hydroxy-ribonucleotide-3'-[RNA].. In terms of biological role, endonuclease that catalyzes the cleavage of RNA on the 3' side of pyrimidine nucleotides. Acts on single-stranded and double-stranded RNA. The sequence is that of Ribonuclease pancreatic (RNASE1) from Papio hamadryas (Hamadryas baboon).